A 397-amino-acid polypeptide reads, in one-letter code: MAKEKFERSKPHVNVGTIGHVDHGKTTLTAALTRVCSEVWGGQAVAFDGIDNAPEEKARGITIATSHVEYESPIRHYAHVDCPGHADYVKNMITGAAQMDGAILVCSAADGPMPQTREHILLARQVGVPYIVVFLNKADMVDDEELLELVEMEVRDLLSQYEFPGDDTPIIVGSALLALEGKDDNGMGTSAVKKLVETLDAYIPEPERAIDKPFLMPIEDVFSISGRGTVVTGRVERGIVRVGEEVEIVGIKDTTKTTCTGVEMFRKLLDEGRAGENVGVLLRGTKRDDVERGQVLAKPGTITPHTVFESEVYVLSKDEGGRHTPFFKGYRPQFYFRTTDVTGACELPEGVEMVMPGDNVKMKVSLIAPIAMEEGLRFAIREGGRTVGAGVVAKIFE.

The tr-type G domain maps to lysine 10–glutamate 207. The G1 stretch occupies residues glycine 19 to threonine 26. Glycine 19–threonine 26 serves as a coordination point for GTP. Threonine 26 contacts Mg(2+). The interval glycine 60–alanine 64 is G2. Residues aspartate 81 to glycine 84 are G3. Residues aspartate 81–histidine 85 and asparagine 136–aspartate 139 each bind GTP. The segment at asparagine 136–aspartate 139 is G4. The G5 stretch occupies residues serine 174 to leucine 176.

Belongs to the TRAFAC class translation factor GTPase superfamily. Classic translation factor GTPase family. EF-Tu/EF-1A subfamily. Monomer.

Its subcellular location is the cytoplasm. It catalyses the reaction GTP + H2O = GDP + phosphate + H(+). GTP hydrolase that promotes the GTP-dependent binding of aminoacyl-tRNA to the A-site of ribosomes during protein biosynthesis. The polypeptide is Elongation factor Tu (Hahella chejuensis (strain KCTC 2396)).